The chain runs to 107 residues: U1-lycotoxin-Ls1f (107 aa).

An N-terminal signal peptide occupies residues 1–20 (MMKVLVVVALLVTLISYSSS). A propeptide spanning residues 21–41 (EGIDDLEADELLSLMANEQTR) is cleaved from the precursor. Disulfide bonds link C44–C59, C51–C68, C58–C86, and C70–C84.

This sequence belongs to the neurotoxin 19 (CSTX) family. 04 (U1-Lctx) subfamily. Expressed by the venom gland.

The protein localises to the secreted. This Lycosa singoriensis (Wolf spider) protein is U1-lycotoxin-Ls1f.